A 397-amino-acid polypeptide reads, in one-letter code: Plasma membrane iron permease (397 aa).

A run of 4 helical transmembrane segments spans residues Phe61–Leu81, Ile92–Met112, Ala177–Tyr197, and Gly292–Trp312. Ser337 and Ser338 each carry phosphoserine. Residues Ser337–Ser346 show a composition bias toward polar residues. The interval Ser337–Ala364 is disordered. Thr340 carries the phosphothreonine modification. Residues Ser346, Ser347, and Ser355 each carry the phosphoserine modification. Residues Asp349–Ala364 show a composition bias toward basic and acidic residues. Thr357 carries the phosphothreonine modification. A phosphoserine mark is found at Ser374, Ser375, and Ser376.

The protein belongs to the oxidase-dependent Fe transporter (OFeT) (TC 9.A.10.1) family.

The protein localises to the membrane. Functionally, permease for high affinity iron uptake. The polypeptide is Plasma membrane iron permease (fip1) (Schizosaccharomyces pombe (strain 972 / ATCC 24843) (Fission yeast)).